The following is an 869-amino-acid chain: Ribonucleoside-diphosphate reductase large chain 2 (869 aa).

The ATP-cone domain maps to Met1 to Lys92. Residues Lys5–Arg6, Glu11–Lys17, Thr53, and Asp57 each bind ATP. Ser202 and Ser217 together coordinate GDP. The cysteines at positions 218 and 443 are disulfide-linked. DTTP contacts are provided by residues Asp226–Ile228, Lys243, Arg256, and Ala263–Gly264. Ser227 carries the post-translational modification Phosphoserine. Residue Lys387 forms a Glycyl lysine isopeptide (Lys-Gly) (interchain with G-Cter in ubiquitin) linkage. A GDP-binding site is contributed by Asn426. The active-site Proton acceptor is Asn426. Cys428 functions as the Cysteine radical intermediate in the catalytic mechanism. Residues Glu430 and Thr608–Thr611 contribute to the GDP site. Glu430 functions as the Proton acceptor in the catalytic mechanism. The disordered stretch occupies residues Ser793–Glu843. Ser806, Ser827, and Ser868 each carry phosphoserine. A compositionally biased stretch (low complexity) spans Ser806–Ser820.

The protein belongs to the ribonucleoside diphosphate reductase large chain family. In terms of assembly, heterotetramer of two large (R1) and two small (R2) subunits. S.cerevisiae has two different R1 subunits (RNR1 and RNR3) and two different R2 subunits (RNR2 and RNR4). The functional form of the small subunits is a RNR2-RNR4 heterodimer, where RNR2 provides the iron-radical center and RNR4 is required for proper folding of RNR2 and assembly with the large subunits. Under normal growth conditions, the active form of the large subunits is a homodimer of the constitutively expressed RNR1. In damaged cells or cells arrested for DNA synthesis, the reductase consists of multiple species because of the association of the small subunits (RNR2-RNR4) with either the RNR1 homodimer or a heterodimer of RNR1 and the damage-inducible RNR3.

It is found in the cytoplasm. It catalyses the reaction a 2'-deoxyribonucleoside 5'-diphosphate + [thioredoxin]-disulfide + H2O = a ribonucleoside 5'-diphosphate + [thioredoxin]-dithiol. Under complex allosteric control mediated by deoxynucleoside triphosphates and ATP binding to separate specificity and activation sites on the large subunit. The type of nucleotide bound at the specificity site determines substrate preference. It seems probable that ATP makes the enzyme reduce CDP and UDP, dGTP favors ADP reduction and dTTP favors GDP reduction. Stimulated by ATP and inhibited by dATP binding to the activity site. In terms of biological role, provides the precursors necessary for DNA synthesis. Catalyzes the biosynthesis of deoxyribonucleotides from the corresponding ribonucleotides. This chain is Ribonucleoside-diphosphate reductase large chain 2 (RNR3), found in Saccharomyces cerevisiae (strain ATCC 204508 / S288c) (Baker's yeast).